The chain runs to 225 residues: Urease accessory protein UreE (225 aa).

A compositionally biased stretch (basic and acidic residues) spans His-171–Gly-215. Positions His-171 to Arg-225 are disordered. Residues His-216–Arg-225 are compositionally biased toward basic residues.

The protein belongs to the UreE family.

It localises to the cytoplasm. In terms of biological role, involved in urease metallocenter assembly. Binds nickel. Probably functions as a nickel donor during metallocenter assembly. The protein is Urease accessory protein UreE of Paraburkholderia xenovorans (strain LB400).